A 142-amino-acid polypeptide reads, in one-letter code: U1 small nuclear ribonucleoprotein C (142 aa).

A Matrin-type zinc finger spans residues 4–36; that stretch reads YYCDYCDTFLTHDSPSVRKTHNGGRKHKDNVRM.

The protein belongs to the U1 small nuclear ribonucleoprotein C family. As to quaternary structure, U1 snRNP is composed of the 7 core Sm proteins B/B', D1, D2, D3, E, F and G that assemble in a heptameric protein ring on the Sm site of the small nuclear RNA to form the core snRNP, and at least 3 U1 snRNP-specific proteins U1-70K, U1-A and U1-C. U1-C interacts with U1 snRNA and the 5' splice-site region of the pre-mRNA.

Its subcellular location is the nucleus. Its function is as follows. Component of the spliceosomal U1 snRNP, which is essential for recognition of the pre-mRNA 5' splice-site and the subsequent assembly of the spliceosome. U1-C is directly involved in initial 5' splice-site recognition for both constitutive and regulated alternative splicing. The interaction with the 5' splice-site seems to precede base-pairing between the pre-mRNA and the U1 snRNA. Stimulates commitment or early (E) complex formation by stabilizing the base pairing of the 5' end of the U1 snRNA and the 5' splice-site region. This is U1 small nuclear ribonucleoprotein C from Caenorhabditis briggsae.